Consider the following 525-residue polypeptide: MTKIERALISVSDKNGVLEFARELSALGVHILSTGGTAKLLLEAGLPVTEVSDYTGFPEMLDGRVKTLHPKVHGGILGRRDLPEHVATMAEHGIGNIDLVCVNLYPFEATVANPDCSLEDAIENIDIGGPTMVRSAAKNWAHVAIVTDSADYPALVGELKANGGRLAKATRFELAKKAFTHTAAYDGAISNYLTSLAEGVVAGKPERVAFPNRLNAQFIKVQDMRYGENPHQAAAFYRDLDPAAGSIAHYKQLQGKELSYNNIADADAAWEAVKTFEQTACVIVKHANPCGVAVGPDTLSAYKLAFATDTTSAFGGIIAFNRPVDAATVEAVTGQFLEVLIAPSFTEEAKAIIAAKKNVRVLEIPLESGANRFELKRVGGGVLVQTPDIRNVGLDELRVVSKRQPTPQEMSDLLFAWRVAKFVKSNAIVFCKDGQTAGIGAGQMSRVDSTRIAARKAQDAGLSLAGAVAASDAFFPFRDGIDVIAEQGIKAIIQPGGSMRDEEVFAAADEHGIALVLTGVRHFRH.

The MGS-like domain maps to 1 to 147 (MTKIERALIS…KNWAHVAIVT (147 aa)).

It belongs to the PurH family.

It carries out the reaction (6R)-10-formyltetrahydrofolate + 5-amino-1-(5-phospho-beta-D-ribosyl)imidazole-4-carboxamide = 5-formamido-1-(5-phospho-D-ribosyl)imidazole-4-carboxamide + (6S)-5,6,7,8-tetrahydrofolate. It catalyses the reaction IMP + H2O = 5-formamido-1-(5-phospho-D-ribosyl)imidazole-4-carboxamide. It functions in the pathway purine metabolism; IMP biosynthesis via de novo pathway; 5-formamido-1-(5-phospho-D-ribosyl)imidazole-4-carboxamide from 5-amino-1-(5-phospho-D-ribosyl)imidazole-4-carboxamide (10-formyl THF route): step 1/1. The protein operates within purine metabolism; IMP biosynthesis via de novo pathway; IMP from 5-formamido-1-(5-phospho-D-ribosyl)imidazole-4-carboxamide: step 1/1. The sequence is that of Bifunctional purine biosynthesis protein PurH from Chromobacterium violaceum (strain ATCC 12472 / DSM 30191 / JCM 1249 / CCUG 213 / NBRC 12614 / NCIMB 9131 / NCTC 9757 / MK).